A 461-amino-acid polypeptide reads, in one-letter code: ATP synthase subunit beta (461 aa).

151–158 (GGAGVGKT) is a binding site for ATP.

It belongs to the ATPase alpha/beta chains family. As to quaternary structure, F-type ATPases have 2 components, CF(1) - the catalytic core - and CF(0) - the membrane proton channel. CF(1) has five subunits: alpha(3), beta(3), gamma(1), delta(1), epsilon(1). CF(0) has three main subunits: a(1), b(2) and c(9-12). The alpha and beta chains form an alternating ring which encloses part of the gamma chain. CF(1) is attached to CF(0) by a central stalk formed by the gamma and epsilon chains, while a peripheral stalk is formed by the delta and b chains.

It is found in the cell inner membrane. The enzyme catalyses ATP + H2O + 4 H(+)(in) = ADP + phosphate + 5 H(+)(out). In terms of biological role, produces ATP from ADP in the presence of a proton gradient across the membrane. The catalytic sites are hosted primarily by the beta subunits. The protein is ATP synthase subunit beta of Alteromonas mediterranea (strain DSM 17117 / CIP 110805 / LMG 28347 / Deep ecotype).